Reading from the N-terminus, the 403-residue chain is Argininosuccinate synthase (403 aa).

ATP-binding positions include Ala-13 to Ser-21 and Ala-40. L-citrulline-binding residues include Tyr-91 and Ser-96. ATP is bound at residue Gly-121. L-aspartate is bound by residues Thr-123, Asn-127, and Asp-128. Asn-127 contacts L-citrulline. Residues Arg-131, Ser-180, Ser-189, Glu-265, and Tyr-277 each coordinate L-citrulline.

Belongs to the argininosuccinate synthase family. Type 1 subfamily. Homotetramer.

The protein resides in the cytoplasm. It carries out the reaction L-citrulline + L-aspartate + ATP = 2-(N(omega)-L-arginino)succinate + AMP + diphosphate + H(+). It functions in the pathway amino-acid biosynthesis; L-arginine biosynthesis; L-arginine from L-ornithine and carbamoyl phosphate: step 2/3. The polypeptide is Argininosuccinate synthase (Leptospira interrogans serogroup Icterohaemorrhagiae serovar copenhageni (strain Fiocruz L1-130)).